The chain runs to 209 residues: Pyridoxine/pyridoxamine 5'-phosphate oxidase (209 aa).

Residues 5–8 (REEY) and K63 contribute to the substrate site. Residues 58–63 (RVVLLK), 73–74 (FT), R79, K80, and Q102 each bind FMN. Residues Y120, R124, and S128 each coordinate substrate. FMN-binding positions include 137 to 138 (QS) and W181. 187–189 (RLH) is a binding site for substrate. R191 contributes to the FMN binding site.

It belongs to the pyridoxamine 5'-phosphate oxidase family. Homodimer. FMN serves as cofactor.

The catalysed reaction is pyridoxamine 5'-phosphate + O2 + H2O = pyridoxal 5'-phosphate + H2O2 + NH4(+). It catalyses the reaction pyridoxine 5'-phosphate + O2 = pyridoxal 5'-phosphate + H2O2. The protein operates within cofactor metabolism; pyridoxal 5'-phosphate salvage; pyridoxal 5'-phosphate from pyridoxamine 5'-phosphate: step 1/1. It functions in the pathway cofactor metabolism; pyridoxal 5'-phosphate salvage; pyridoxal 5'-phosphate from pyridoxine 5'-phosphate: step 1/1. Catalyzes the oxidation of either pyridoxine 5'-phosphate (PNP) or pyridoxamine 5'-phosphate (PMP) into pyridoxal 5'-phosphate (PLP). The sequence is that of Pyridoxine/pyridoxamine 5'-phosphate oxidase from Alcanivorax borkumensis (strain ATCC 700651 / DSM 11573 / NCIMB 13689 / SK2).